Consider the following 496-residue polypeptide: Glycylpeptide N-tetradecanoyltransferase 1 (496 aa).

A disordered region spans residues 1 to 82 (MADESETAVK…STQDQPVKMT (82 aa)). 2 positions are modified to phosphoserine: Ser31 and Ser47. Over residues 55 to 66 (KKKKKKQKKKKE) the composition is skewed to basic residues. At Ser83 the chain carries Phosphoserine. Residues Gln118, Phe119, Trp120, Phe247, Leu248, Cys249, Val250, Ser256, Arg258, Val259, and Ala260 each coordinate tetradecanoyl-CoA.

This sequence belongs to the NMT family. Ubiquitous.

The protein localises to the cytoplasm. It localises to the cytosol. The protein resides in the membrane. The catalysed reaction is N-terminal glycyl-[protein] + tetradecanoyl-CoA = N-tetradecanoylglycyl-[protein] + CoA + H(+). The enzyme catalyses N-terminal glycyl-L-lysyl-[protein] + tetradecanoyl-CoA = N-terminal glycyl-(N(6)-tetradecanoyl)-L-lysyl-[protein] + CoA + H(+). Adds a myristoyl group to the N-terminal glycine residue of certain cellular and viral proteins. Also able to mediate N-terminal lysine myristoylation of proteins: catalyzes myristoylation of ARF6 on both 'Gly-2' and 'Lys-3'. Lysine myristoylation is required to maintain ARF6 on membranes during the GTPase cycle. Required for normal embryogenesis. The protein is Glycylpeptide N-tetradecanoyltransferase 1 of Mus musculus (Mouse).